The primary structure comprises 171 residues: Sec-independent protein translocase protein TatB (171 aa).

The chain crosses the membrane as a helical span at residues 2-22 (FDGIGFMELLLIGVLGLVVLG). The segment at 69–171 (SKGLSNLSPE…DTRSNPKANG (103 aa)) is disordered. Over residues 88–97 (QAAQSVNRPY) the composition is skewed to polar residues. Low complexity-rich tracts occupy residues 114 to 130 (HSPV…HTSP) and 138 to 158 (PTAT…SEPS). Positions 160 to 171 (GADTRSNPKANG) are enriched in polar residues.

This sequence belongs to the TatB family. In terms of assembly, the Tat system comprises two distinct complexes: a TatABC complex, containing multiple copies of TatA, TatB and TatC subunits, and a separate TatA complex, containing only TatA subunits. Substrates initially bind to the TatABC complex, which probably triggers association of the separate TatA complex to form the active translocon.

Its subcellular location is the cell inner membrane. In terms of biological role, part of the twin-arginine translocation (Tat) system that transports large folded proteins containing a characteristic twin-arginine motif in their signal peptide across membranes. Together with TatC, TatB is part of a receptor directly interacting with Tat signal peptides. TatB may form an oligomeric binding site that transiently accommodates folded Tat precursor proteins before their translocation. This chain is Sec-independent protein translocase protein TatB, found in Shewanella baltica (strain OS185).